The chain runs to 2197 residues: RNA1 polyprotein (2197 aa).

Residues 621 to 1167 are Cytoplasmic-facing; it reads GLTDVFGVPL…YDWVYANGGK (547 aa). The 168-residue stretch at 766–933 folds into the SF3 helicase domain; that stretch reads VKRLSDLHKR…EGVAYNPSDP (168 aa). 796 to 803 lines the ATP pocket; sequence GGPRCGKS. Residues 1168 to 1188 form a helical membrane-spanning segment; the sequence is LLLVLAAVILILFFGSACIKL. Residues 1189-1212 lie on the Lumenal side of the membrane; it reads MQAIFCGAAGGTVSMAAVGKMTVQ. Residue Asn1228 is glycosylated (N-linked (GlcNAc...) asparagine; by host). Residues 1243–1475 form the Peptidase C3 domain; it reads LAEAQFNESH…MPRYISHASF (233 aa). Active-site for picornain 3C-like protease activity residues include His1283, Glu1331, and Cys1433. The region spanning 1765–1888 is the RdRp catalytic domain; the sequence is SVALNCDYSR…SIKPDTMKYF (124 aa).

It belongs to the nepoviruses RNA1 polyprotein family. Specific enzymatic cleavages by picornain 3C-like protease in vivo yield mature proteins. Picornain 3C-like protease is autocatalytically processed. NTB exists as NTB-VPg polyprotein as well as NTB mature protein. Post-translationally, VPg is uridylylated by the polymerase and is covalently linked to the 5'-end of genomic RNA. This uridylylated form acts as a nucleotide-peptide primer for the polymerase.

Its subcellular location is the host endoplasmic reticulum lumen. The protein resides in the host endoplasmic reticulum membrane. The enzyme catalyses RNA(n) + a ribonucleoside 5'-triphosphate = RNA(n+1) + diphosphate. Functionally, picornain 3C-like protease is a thiol protease that cleaves at Gln-|-Gly or Gln-|-Ser sites in the P1 and P2 polyproteins. The VPg-NTB polyprotein may act as a membrane-anchor for the replication complex. The sequence is that of RNA1 polyprotein from Tomato ringspot virus (isolate raspberry) (ToRSV).